Reading from the N-terminus, the 253-residue chain is GTP cyclohydrolase 1 type 2 homolog (253 aa).

The a divalent metal cation site is built by His64, His65, Asp101, His222, and Glu226.

The protein belongs to the GTP cyclohydrolase I type 2/NIF3 family. In terms of assembly, homohexamer.

This Halobacterium salinarum (strain ATCC 700922 / JCM 11081 / NRC-1) (Halobacterium halobium) protein is GTP cyclohydrolase 1 type 2 homolog.